A 1269-amino-acid chain; its full sequence is MTPTTNNKRINFASIKNPLFYPDFLEVQLKSFHDFLQLDTPPERRKKEGLYKVFAENFPITDTRNNFVLEFLDYYIDPPKYSIEECLSRGLTYSVPLKAKLKLYCTDPDHEDFATVIQDVFLGPIPYMTSSGTFVINGAERVIVSQLHRSPGVFFGQSLHTNGTKLYSARIIPFKGSWIEFATDINNVMYAYIDRKKKLPVTTLLRAIGFEADKDILDIFNLAEEVKVTKANLKKCIGRKLAARVINTYIDDLSDEDTGEVVSMERITVVVDREVELTEDNIEAILNSNTQTILLHRNDSNTSDYSIIFNTLQKDPCNSEKEALYYVYRQLRNAEPADDASAREVITNLFFSDKRYDLGDVGRYRINKKLNLNIDPDIKVLTNEDIIEIIKYLIELVNSKASVDDIDHLSNRRVRTVGEQLYNQFGIGLARMARTVRDRMNVRDNEVFTPIDLVNAKTISSVVNSFFGTNALSQFMDQTNPLAEITHKRRLSALGPGGLSRERAGFEVRDVHYTHYGRLCPIETPEGPNIGLISSLCVYAKISDLGFITTPYREVKNGKVDFSDNGLKYYTAEEEEEKTVAQGNAPLDENGRFVRERVKARYESDFPLVTPDEVDLMDVSPTQIASIAAALIPFLEHDDANRALMGSNMMRQAVPLLRPESPIVGTGIEGKLVKDSRTQIVAERGGEVVFVDASCIKIRYDRTADEEFVSFDDAIVTYYLPKYRKTNQSTTIDLHPICSKGDRVEAGQILTEGYSTQGGELALGRNVQVAYMPWKGYNYEDAIVLNERMVREDFFTSVHVDEYILEVRETKRGLEELTSDIPNVSEDATRDLDENGIVRIGAHIEPGDILIGKITPKGESDPTPEEKLLRAIFGDKAGDVKDASLKATPSLRGVVIDTKLFSKAAKKKSRTSTKETVSKLDETYAKRQQQLHERLIEKLTELTKGKTCCGVKDYLNVELIKAGSKLTKKDLEALDFNVIQLSDWTNDAHTNELIKAVAVNYLKHSKEIEAELRRRKLDETIGDELPAGIVQMAKVYIAKKRKIQVGDKMAGRHGNKGIVSKIVRQEDMPFLADGTPVDICLNPLGVPSRMNLGQIFEAVLAWAGRKMNVKFATPIFDGASLNDMNEWTDKAGLPRDGKTYLYDGGTGERFDQPATVGVTYFLKLGHMVDDKMHARSIGPYSLITQQPLGGKAQFGGQRFGEMEVWALEAFGASHILQEILTVKSDDVVGRSKAYEAIVKGDPMPTPGIPESLNVLLHELKGLGLSFSLD.

This sequence belongs to the RNA polymerase beta chain family. As to quaternary structure, the RNAP catalytic core consists of 2 alpha, 1 beta, 1 beta' and 1 omega subunit. When a sigma factor is associated with the core the holoenzyme is formed, which can initiate transcription.

The catalysed reaction is RNA(n) + a ribonucleoside 5'-triphosphate = RNA(n+1) + diphosphate. Its function is as follows. DNA-dependent RNA polymerase catalyzes the transcription of DNA into RNA using the four ribonucleoside triphosphates as substrates. The chain is DNA-directed RNA polymerase subunit beta from Porphyromonas gingivalis (strain ATCC 33277 / DSM 20709 / CIP 103683 / JCM 12257 / NCTC 11834 / 2561).